A 243-amino-acid chain; its full sequence is Small ribosomal subunit protein eS4 (243 aa).

Residues 37-99 (IPLALLLKHY…SDLYFRIVPD (63 aa)) enclose the S4 RNA-binding domain.

This sequence belongs to the eukaryotic ribosomal protein eS4 family.

The sequence is that of Small ribosomal subunit protein eS4 (rps4e) from Sulfurisphaera tokodaii (strain DSM 16993 / JCM 10545 / NBRC 100140 / 7) (Sulfolobus tokodaii).